The following is a 433-amino-acid chain: Steroid hormone receptor ERR2 (433 aa).

The interval 1-38 (MSSEDRHLGSSCGSFIKTEPSSPSSGIDALSHHSPSGS) is disordered. Residues 93-211 (YMLNAIPKRL…SPPAKKPLTK (119 aa)) are interaction with NANOG. Positions 100–186 (KRLCLVCGDI…RVRGGRQKYK (87 aa)) form a DNA-binding region, nuclear receptor. NR C4-type zinc fingers lie at residues 103 to 123 (CLVC…CEAC) and 139 to 163 (CPAT…FMKC). An essential for ESRRB transcriptional activity and interaction with NCOA3 region spans residues 203 to 433 (PPAKKPLTKI…LFLEMLEAKV (231 aa)). In terms of domain architecture, NR LBD spans 208–432 (PLTKIVSNLL…KLFLEMLEAK (225 aa)).

This sequence belongs to the nuclear hormone receptor family. NR3 subfamily. In terms of assembly, binds DNA as a monomer. Interacts with NR0B1; represses ESRRB activity at the GATA6 promoter. Interacts with NANOG; reciprocally modulates their transcriptional activities and activates POU5F1 expression. Interacts with NCOA3; mediates the interaction between ESRRB and RNA polymerase II complexes and allows NCOA3 corecruitment to ESRRB, KLF4, NANOG, and SOX2 enhancer regions to trigger ESRRB-dependent gene activation involved in self-renewal and pluripotency. Interacts with KDM1A; co-occupes the core set of ESRRB targets including ELF5 and EOMES. Interacts with the multiprotein complex Integrator, at least composed of INTS1, INTS2, INTS3, INTS4, INTS5, INTS6, INTS7, INTS8, INTS9/RC74, INTS10, INTS11/CPSF3L and INTS12; ESRRB is probably not a core component of the integrator complex and associates to integrator via its interaction with INTS1 and INTS9; attracts the transcriptional machinery. Interacts with JARID2. Interacts with POU5F1; recruits ESRRB near the POU5F1-SOX2 element in the NANOG proximal promoter leading to activation of NANOG expression; the interaction is DNA independent. In terms of processing, acetylated by PCAF/KAT2 (in vitro). In terms of tissue distribution, highly expressed in undifferentiated ESCs. Expressed in immature horizontal cells and in rod photoreceptors at intermediate and late stages of differentiation. Expressed in endolymph-producing epithelial cells.

The protein resides in the nucleus. Its subcellular location is the cytoplasm. It is found in the chromosome. Its function is as follows. Transcription factor that binds a canonical ESRRB recognition (ERRE) sequence 5'TCAAGGTCA-3' localized on promoter and enhancer of targets genes regulating their expression or their transcriptional activity. Plays a role, in a LIF-independent manner, in maintainance of self-renewal and pluripotency of embryonic and trophoblast stem cells through different signaling pathways including FGF signaling pathway and Wnt signaling pathways. Involved in morula development (2-16 cells embryos) by acting as a regulator at the 8-cell stage. Upon FGF signaling pathway activation, interacts with KDM1A by directly binding to enhancer site of ELF5 and EOMES and activating their transcription leading to self-renewal of trophoblast stem cells. Also regulates expression of multiple rod-specific genes and is required for survival of this cell type. Plays a role as transcription factor activator of GATA6, NR0B1, POU5F1 and PERM1. Plays a role as transcription factor repressor of NFE2L2 transcriptional activity and ESR1 transcriptional activity. During mitosis remains bound to a subset of interphase target genes, including pluripotency regulators, through the canonical ESRRB recognition (ERRE) sequence, leading to their transcriptional activation in early G1 phase. Can coassemble on structured DNA elements with other transcription factors like SOX2, POU5F1, KDM1A and NCOA3 to trigger ESRRB-dependent gene activation. This mechanism, in the case of SOX2 corecruitment prevents the embryonic stem cells (ESCs) to epiblast stem cells (EpiSC) transition through positive regulation of NR0B1 that inhibits the EpiSC transcriptional program. Also plays a role inner ear development by controlling expression of ion channels and transporters and in early placentation. This is Steroid hormone receptor ERR2 from Mus musculus (Mouse).